Here is a 305-residue protein sequence, read N- to C-terminus: tRNA N6-adenosine threonylcarbamoyltransferase (305 aa).

Residues histidine 108 and histidine 112 each coordinate Fe cation. Substrate is bound by residues 130–134 (VVSGG), aspartate 163, glycine 176, aspartate 180, and asparagine 264. Position 288 (aspartate 288) interacts with Fe cation.

Belongs to the KAE1 / TsaD family. Requires Fe(2+) as cofactor.

The protein resides in the cytoplasm. It catalyses the reaction L-threonylcarbamoyladenylate + adenosine(37) in tRNA = N(6)-L-threonylcarbamoyladenosine(37) in tRNA + AMP + H(+). Required for the formation of a threonylcarbamoyl group on adenosine at position 37 (t(6)A37) in tRNAs that read codons beginning with adenine. Is involved in the transfer of the threonylcarbamoyl moiety of threonylcarbamoyl-AMP (TC-AMP) to the N6 group of A37, together with TsaE and TsaB. TsaD likely plays a direct catalytic role in this reaction. The protein is tRNA N6-adenosine threonylcarbamoyltransferase of Mycoplasma mobile (strain ATCC 43663 / 163K / NCTC 11711) (Mesomycoplasma mobile).